The chain runs to 462 residues: Chromosomal replication initiator protein DnaA (462 aa).

The tract at residues 1–84 (MAVSLWQQCI…RFDIGSRPSA (84 aa)) is domain I, interacts with DnaA modulators. Positions 84–125 (APRPVQATAAVERPKFEQNTKPAKTSFNVNSPEPAMAANHRS) are domain II. A domain III, AAA+ region region spans residues 126–342 (NINRTYQFEN…GALNRVIANA (217 aa)). Glycine 170, glycine 172, lysine 173, and threonine 174 together coordinate ATP. Positions 343 to 462 (NFTGRPITID…YANLIRTLSS (120 aa)) are domain IV, binds dsDNA.

This sequence belongs to the DnaA family. As to quaternary structure, oligomerizes as a right-handed, spiral filament on DNA at oriC.

The protein localises to the cytoplasm. Functionally, plays an essential role in the initiation and regulation of chromosomal replication. ATP-DnaA binds to the origin of replication (oriC) to initiate formation of the DNA replication initiation complex once per cell cycle. Binds the DnaA box (a 9 base pair repeat at the origin) and separates the double-stranded (ds)DNA. Forms a right-handed helical filament on oriC DNA; dsDNA binds to the exterior of the filament while single-stranded (ss)DNA is stabiized in the filament's interior. The ATP-DnaA-oriC complex binds and stabilizes one strand of the AT-rich DNA unwinding element (DUE), permitting loading of DNA polymerase. After initiation quickly degrades to an ADP-DnaA complex that is not apt for DNA replication. Binds acidic phospholipids. The sequence is that of Chromosomal replication initiator protein DnaA from Shewanella sediminis (strain HAW-EB3).